The sequence spans 332 residues: T-cell surface glycoprotein CD1c2 (332 aa).

A signal peptide spans 1–17 (MLFLQFLFVDVVLGGSI). Over 18 to 300 (TENVVQENIS…IILYWGHGLS (283 aa)) the chain is Extracellular. N-linked (GlcNAc...) asparagine glycans are attached at residues asparagine 25, asparagine 38, and asparagine 75. Cystine bridges form between cysteine 120/cysteine 184 and cysteine 224/cysteine 279. In terms of domain architecture, Ig-like spans 205 to 292 (PEVWLSSSPN…HSSLRDQDII (88 aa)). A helical transmembrane segment spans residues 301–321 (VILIALAVIVPLVLLIVLVLL). The Cytoplasmic segment spans residues 322 to 332 (CKKRCTYQGIP).

Heterodimer with B2M (beta-2-microglobulin).

It localises to the cell membrane. The protein resides in the endosome membrane. Antigen-presenting protein that binds self and non-self lipid and glycolipid antigens and presents them to T-cell receptors on natural killer T-cells. The chain is T-cell surface glycoprotein CD1c2 (CD1C2) from Cavia porcellus (Guinea pig).